A 165-amino-acid chain; its full sequence is UPF0303 protein BTH_I2506 (165 aa).

The protein belongs to the UPF0303 family.

This chain is UPF0303 protein BTH_I2506, found in Burkholderia thailandensis (strain ATCC 700388 / DSM 13276 / CCUG 48851 / CIP 106301 / E264).